Here is a 933-residue protein sequence, read N- to C-terminus: Protein translocase subunit SecA (933 aa).

ATP contacts are provided by residues Gln-90, 108–112 (GEGKT), and Asp-504. Residues 539–570 (GMGSNNRRPQGFGQDSKKKKWQPSADIFPTDL) are disordered.

It belongs to the SecA family. In terms of assembly, monomer and homodimer. Part of the essential Sec protein translocation apparatus which comprises SecA, SecYEG and auxiliary proteins SecDF. Other proteins may also be involved.

The protein resides in the cell inner membrane. Its subcellular location is the cellular thylakoid membrane. The protein localises to the cytoplasm. The catalysed reaction is ATP + H2O + cellular proteinSide 1 = ADP + phosphate + cellular proteinSide 2.. Functionally, part of the Sec protein translocase complex. Interacts with the SecYEG preprotein conducting channel. Has a central role in coupling the hydrolysis of ATP to the transfer of proteins into and across the cell membrane, serving as an ATP-driven molecular motor driving the stepwise translocation of polypeptide chains across the membrane. Its function is as follows. Probably participates in protein translocation into and across both the cytoplasmic and thylakoid membranes in cyanobacterial cells. This is Protein translocase subunit SecA from Crocosphaera subtropica (strain ATCC 51142 / BH68) (Cyanothece sp. (strain ATCC 51142)).